Here is a 701-residue protein sequence, read N- to C-terminus: Meprin A subunit beta (701 aa).

The signal sequence occupies residues 1–22 (MDLWNLSWFLFLDALLVISGLA). The propeptide occupies 23–61 (TPENFDVDGGMDQDIFDINEGLGLDLFEGDIRLDRAQIR). The Extracellular segment spans residues 23–652 (TPENFDVDGG…CEKRGSTRDT (630 aa)). Positions 62–256 (NSIIGEKYRW…LKLNQLYNCS (195 aa)) constitute a Peptidase M12A domain. Disulfide bonds link cysteine 103-cysteine 255, cysteine 124-cysteine 144, and cysteine 265-cysteine 427. Histidine 152 serves as a coordination point for Zn(2+). Glutamate 153 is an active-site residue. 2 residues coordinate Zn(2+): histidine 156 and histidine 162. N-linked (GlcNAc...) asparagine glycans are attached at residues asparagine 218, asparagine 254, asparagine 370, asparagine 421, asparagine 436, asparagine 445, asparagine 547, and asparagine 592. The region spanning 260–429 (SFMDSCSFEL…INLSETRCPH (170 aa)) is the MAM domain. The region spanning 430–585 (HIWHIRNFTQ…GDDVYILLTV (156 aa)) is the MATH domain. Serine 593 is a glycosylation site (O-linked (GalNAc...) serine). Residues threonine 594 and threonine 599 are each glycosylated (O-linked (GalNAc...) threonine). The segment at 595-607 (QIQLTPAPSVQDL) is required for proteolytic processing. Residue serine 603 is glycosylated (O-linked (GalNAc...) serine). Positions 604–644 (VQDLCSKTTCKNDGVCTVRDGKAECRCQSGEDWWYMGERCE) constitute an EGF-like domain. Cystine bridges form between cysteine 608–cysteine 619, cysteine 613–cysteine 628, and cysteine 630–cysteine 643. The chain crosses the membrane as a helical span at residues 653–673 (IVIAVSSTVAVFALMLIITLV). Topologically, residues 674 to 701 (SVYCTRKKYRERMSSNRPNLTPQNQHAF) are cytoplasmic. Position 694 is a phosphothreonine (threonine 694).

As to quaternary structure, homotetramer consisting of disulfide-linked beta subunits, or heterotetramer of two alpha and two beta subunits formed by non-covalent association of two disulfide-linked heterodimers. Interacts with MBL2 through its carbohydrate moiety. This interaction may inhibit its catalytic activity. Interacts with TSPAN8. Zn(2+) serves as cofactor. Post-translationally, phosphorylated by PKC at multiple sites of its cytoplasmic part. Phosphorylation dcreases activity at the cell surface, leading to diminished substrate cleavage. In terms of processing, N-glycosylated; contains high mannose and/or complex biantennary structures. O-glycosylation protect the C-terminal region from proteolytic cleavage and diminish secretion, this seems to be specific to human. Post-translationally, proteolytically activated by trypsin in the intestinal lumen and kallikrein-related peptidases in other tissues. In terms of tissue distribution, the major site of expression is the brush border membrane of small intestinal and kidney epithelial cells.

The protein resides in the cell membrane. The protein localises to the secreted. It carries out the reaction Hydrolysis of proteins, including azocasein, and peptides. Hydrolysis of 5-His-|-Leu-6, 6-Leu-|-Cys-7, 14-Ala-|-Leu-15 and 19-Cys-|-Gly-20 bonds in insulin B chain.. Strongly inhibited by fetuin-A/AHSG. Membrane metallopeptidase that sheds many membrane-bound proteins. Exhibits a strong preference for acidic amino acids at the P1' position. Known substrates include: FGF19, VGFA, IL1B, IL18, procollagen I and III, E-cadherin, KLK7, gastrin, ADAM10, tenascin-C. The presence of several pro-inflammatory cytokine among substrates implicate MEP1B in inflammation. It is also involved in tissue remodeling due to its capability to degrade extracellular matrix components. Also cleaves the amyloid precursor protein/APP, thereby releasing neurotoxic amyloid beta peptides. The chain is Meprin A subunit beta (MEP1B) from Homo sapiens (Human).